Consider the following 378-residue polypeptide: Mevalonate kinase (378 aa).

ATP contacts are provided by residues Lys-10, Ser-138, and 143–149 (GSGLGSS). Mg(2+) contacts are provided by Ser-149 and Glu-193. Residue Asp-204 is the Proton acceptor of the active site.

The protein belongs to the GHMP kinase family. Mevalonate kinase subfamily. It depends on Mg(2+) as a cofactor.

The protein localises to the cytoplasm. The enzyme catalyses (R)-mevalonate + ATP = (R)-5-phosphomevalonate + ADP + H(+). Its pathway is isoprenoid biosynthesis; isopentenyl diphosphate biosynthesis via mevalonate pathway; isopentenyl diphosphate from (R)-mevalonate: step 1/3. With respect to regulation, its activity is inhibited in vitro by geranyl pyrophosphate (GPP) and farnesyl pyrophosphate (FPP) that bind competitively at the ATP-binding site on the enzyme. In terms of biological role, catalyzes the phosphorylation of mevalonate to mevalonate 5-phosphate, a key step in isoprenoid and cholesterol biosynthesis. This chain is Mevalonate kinase, found in Arabidopsis thaliana (Mouse-ear cress).